The primary structure comprises 462 residues: MANMLYFSLLALLFMTGIASEGTISSGLASLKAKIDAKRPSGKQLFDKVANMQKQIEEKFSNDDERAKVMGAIGSLSTAVGKFQSGDPAKIASGCLDILVGISSVLKDFAKFSPIFSILSMVVGLFSGTKAEESVGSVVKKVVQEQSDQELQEALYGVKREYAVSKAFLDGVRNETSDLSPTEVSALGANVPVYQGVRFIAMVVQRIKNRKPRTESEIKRVLSMLELFTDLCSLRDLILLDLYQLVATPGHSPNIASGIKEVSNLGREEYKKVFEDLLKTNDKETYLFLSYLYPRERNEQSQKIFKFFDLMKVKYDDRLKQDLTGIQVFSSLHWPNYFLCSSKDYLALICTKPYGSLRLDKLNDGFYSIKTTQSNPKVCHRYGEYILFTHDRNDDLEKFNFVPVKLGERKIYLLSSKASPNKFAYVPKTAKGDLFFVDGIPSQLGYGNQGYFTLATDENEQT.

The first 19 residues, 1-19 (MANMLYFSLLALLFMTGIA), serve as a signal peptide directing secretion. N-linked (GlcNAc...) asparagine glycosylation is present at Asn-174.

The protein belongs to the jellyfish toxin family. Type I subfamily. Contains disulfide bonds. Post-translationally, N-glycosylated.

It localises to the secreted. Its subcellular location is the nematocyst. It is found in the target cell membrane. Its function is as follows. Critical allergen and main toxic protein of C.quadrigatus venom. Has potent hemolytic activity. Is lethal to crayfish. Causes cutaneous inflammation in humans. May act as a pore-forming toxin, disrupting normal transmembrane ion concentration gradients in susceptible cells. This chain is Toxin CqTX-A, found in Chiropsoides quadrigatus (Box jellyfish).